Reading from the N-terminus, the 151-residue chain is Endoribonuclease YbeY (151 aa).

Zn(2+)-binding residues include histidine 113, histidine 117, and histidine 123.

It belongs to the endoribonuclease YbeY family. The cofactor is Zn(2+).

It localises to the cytoplasm. In terms of biological role, single strand-specific metallo-endoribonuclease involved in late-stage 70S ribosome quality control and in maturation of the 3' terminus of the 16S rRNA. This is Endoribonuclease YbeY from Polaromonas naphthalenivorans (strain CJ2).